Here is a 686-residue protein sequence, read N- to C-terminus: Pentatricopeptide repeat-containing protein 1, mitochondrial (686 aa).

Residues 55 to 67 (RMSSLCSDSSTPV) show a composition bias toward polar residues. The tract at residues 55–79 (RMSSLCSDSSTPVAPQEEEEEESFG) is disordered. 5 PPR repeats span residues 124-160 (TPYW…RLQP), 161-195 (LECN…DLEP), 196-234 (SDAT…NFQL), 235-269 (NLKT…GHAV), and 270-306 (TEET…GIKP). The segment at 383–407 (KLEGPPAFPEARETSRTQPEVETKA) is disordered. Residues 392–407 (EARETSRTQPEVETKA) show a composition bias toward basic and acidic residues. 2 PPR repeats span residues 508 to 542 (DITF…GIVP) and 575 to 609 (NTHI…SVPV).

It belongs to the PTCD1 family. Associates with mitochondrial leucine tRNAs. Interacts with ELAC2.

Its subcellular location is the mitochondrion matrix. Mitochondrial protein implicated in negative regulation of leucine tRNA levels, as well as negative regulation of mitochondria-encoded proteins and COX activity. Also affects the 3'-processing of mitochondrial tRNAs. This chain is Pentatricopeptide repeat-containing protein 1, mitochondrial (Ptcd1), found in Rattus norvegicus (Rat).